A 558-amino-acid polypeptide reads, in one-letter code: Glutamine-dependent NAD(+) synthetase (558 aa).

Residues 2–262 enclose the CN hydrolase domain; that stretch reads FTIALAQLNP…LALLSYDLSS (261 aa). E42 (proton acceptor; for glutaminase activity) is an active-site residue. The active-site For glutaminase activity is the K117. Y123 contacts L-glutamine. The Nucleophile; for glutaminase activity role is filled by C153. Positions 190 and 196 each coordinate L-glutamine. The ligase stretch occupies residues 284–558; it reads ALVLGVGDYL…IAQAFHPQGS (275 aa). Residue 304 to 311 coordinates ATP; it reads GLSGGIDS. N387 is a deamido-NAD(+) binding site. An ATP-binding site is contributed by T411. Residues E416 and K526 each contribute to the deamido-NAD(+) site.

This sequence in the C-terminal section; belongs to the NAD synthetase family.

The catalysed reaction is deamido-NAD(+) + L-glutamine + ATP + H2O = L-glutamate + AMP + diphosphate + NAD(+) + H(+). The protein operates within cofactor biosynthesis; NAD(+) biosynthesis; NAD(+) from deamido-NAD(+) (L-Gln route): step 1/1. Its function is as follows. Catalyzes the ATP-dependent amidation of deamido-NAD to form NAD. Uses L-glutamine as a nitrogen source. The chain is Glutamine-dependent NAD(+) synthetase from Synechocystis sp. (strain ATCC 27184 / PCC 6803 / Kazusa).